Here is a 920-residue protein sequence, read N- to C-terminus: 2-oxoadipate dehydrogenase complex component E1 (920 aa).

N6-succinyllysine is present on residues lysine 183 and lysine 188. The tract at residues 299–318 is disordered; sequence GKTRGRQQSQEDGDYSPNGS. N6-succinyllysine occurs at positions 800 and 818.

The protein belongs to the alpha-ketoglutarate dehydrogenase family. The 2-oxoadipate dehydrogenase complex is composed of OADH (2-oxoadipate dehydrogenase; E1a), DLST (dihydrolipoamide succinyltransferase; E2) and DLD (dihydrolipoamide dehydrogenase; E3). E1a functional unit is a dimer. Thiamine diphosphate is required as a cofactor.

The protein resides in the mitochondrion. It carries out the reaction N(6)-[(R)-lipoyl]-L-lysyl-[protein] + 2-oxoadipate + H(+) = N(6)-[(R)-S(8)-glutaryldihydrolipoyl]-L-lysyl-[protein] + CO2. It participates in amino-acid degradation. Its function is as follows. 2-oxoadipate dehydrogenase (E1a) component of the 2-oxoadipate dehydrogenase complex (OADHC). Participates in the first step, rate limiting for the overall conversion of 2-oxoadipate (alpha-ketoadipate) to glutaryl-CoA and CO(2) catalyzed by the whole OADHC. Catalyzes the irreversible decarboxylation of 2-oxoadipate via the thiamine diphosphate (ThDP) cofactor and subsequent transfer of the decarboxylated acyl intermediate on an oxidized dihydrolipoyl group that is covalently amidated to the E2 enzyme (dihydrolipoyllysine-residue succinyltransferase or DLST). Can catalyze the decarboxylation of 2-oxoglutarate in vitro, but at a much lower rate than 2-oxoadipate. Responsible for the last step of L-lysine, L-hydroxylysine and L-tryptophan catabolism with the common product being 2-oxoadipate. The chain is 2-oxoadipate dehydrogenase complex component E1 (Dhtkd1) from Rattus norvegicus (Rat).